Consider the following 312-residue polypeptide: tRNA uridine(34) hydroxylase (312 aa).

The 95-residue stretch at 123–217 (SDPEVLLIDT…YLEEVPQEQS (95 aa)) folds into the Rhodanese domain. Residue Cys177 is the Cysteine persulfide intermediate of the active site. Basic and acidic residues predominate over residues 282 to 293 (ARERQKQIELAR). The disordered stretch occupies residues 282-312 (ARERQKQIELARQRNQPHPLGRDPRQSTLEN).

This sequence belongs to the TrhO family.

It catalyses the reaction uridine(34) in tRNA + AH2 + O2 = 5-hydroxyuridine(34) in tRNA + A + H2O. Catalyzes oxygen-dependent 5-hydroxyuridine (ho5U) modification at position 34 in tRNAs. This is tRNA uridine(34) hydroxylase from Pseudomonas paraeruginosa (strain DSM 24068 / PA7) (Pseudomonas aeruginosa (strain PA7)).